Reading from the N-terminus, the 351-residue chain is MSKFWSPFVKDLVPYVPGEQPKLSRLVKLNTNENPYGPSPQALAAMQAELNDDLRLYPDPNGERLKQAVAAHYGVQANQVFVGNGSDEVLAHIFHGLFQHDLPLLFPDVTYSFYPVYCGLYGIAHEKIALDERFRIRVEDYARPNGGIIFPNPNAPTGCLLPLDAIEAMLKASPDSVVVVDEAYVDFGGESAIALVDRYPNLLVTQTLSKSRSLAGLRVGLAVGHADLVEALERIKNSFNSYPLDRLAIAGAAAAFEDDAYFRRTCQAVIDSREALSASLQALGFEVLPSAANFVFARHPRHDAGQIASTLREQGVIVRHFKQARIDQFLRITIGSPEQNQALLDALHFLK.

Lysine 210 carries the N6-(pyridoxal phosphate)lysine modification.

The protein belongs to the class-II pyridoxal-phosphate-dependent aminotransferase family. Histidinol-phosphate aminotransferase subfamily. As to quaternary structure, homodimer. It depends on pyridoxal 5'-phosphate as a cofactor.

The enzyme catalyses L-histidinol phosphate + 2-oxoglutarate = 3-(imidazol-4-yl)-2-oxopropyl phosphate + L-glutamate. Its pathway is amino-acid biosynthesis; L-histidine biosynthesis; L-histidine from 5-phospho-alpha-D-ribose 1-diphosphate: step 7/9. In Pseudomonas aeruginosa (strain ATCC 15692 / DSM 22644 / CIP 104116 / JCM 14847 / LMG 12228 / 1C / PRS 101 / PAO1), this protein is Histidinol-phosphate aminotransferase 1 (hisC1).